The sequence spans 225 residues: Phosphatidylserine decarboxylase proenzyme (225 aa).

S189 functions as the Schiff-base intermediate with substrate; via pyruvic acid in the catalytic mechanism. S189 is subject to Pyruvic acid (Ser); by autocatalysis.

It belongs to the phosphatidylserine decarboxylase family. PSD-A subfamily. Heterodimer of a large membrane-associated beta subunit and a small pyruvoyl-containing alpha subunit. Pyruvate is required as a cofactor. Post-translationally, is synthesized initially as an inactive proenzyme. Formation of the active enzyme involves a self-maturation process in which the active site pyruvoyl group is generated from an internal serine residue via an autocatalytic post-translational modification. Two non-identical subunits are generated from the proenzyme in this reaction, and the pyruvate is formed at the N-terminus of the alpha chain, which is derived from the carboxyl end of the proenzyme. The post-translation cleavage follows an unusual pathway, termed non-hydrolytic serinolysis, in which the side chain hydroxyl group of the serine supplies its oxygen atom to form the C-terminus of the beta chain, while the remainder of the serine residue undergoes an oxidative deamination to produce ammonia and the pyruvoyl prosthetic group on the alpha chain.

The protein localises to the cell membrane. It catalyses the reaction a 1,2-diacyl-sn-glycero-3-phospho-L-serine + H(+) = a 1,2-diacyl-sn-glycero-3-phosphoethanolamine + CO2. It functions in the pathway phospholipid metabolism; phosphatidylethanolamine biosynthesis; phosphatidylethanolamine from CDP-diacylglycerol: step 2/2. In terms of biological role, catalyzes the formation of phosphatidylethanolamine (PtdEtn) from phosphatidylserine (PtdSer). The protein is Phosphatidylserine decarboxylase proenzyme of Amoebophilus asiaticus (strain 5a2).